The sequence spans 152 residues: Small ribosomal subunit protein uS13 (152 aa).

At Ser41 the chain carries Phosphoserine.

Belongs to the universal ribosomal protein uS13 family.

It localises to the cytoplasm. Functionally, located at the top of the head of the 40S subunit, it contacts several helices of the 18S rRNA. In Drosophila melanogaster (Fruit fly), this protein is Small ribosomal subunit protein uS13 (RpS18).